The sequence spans 424 residues: Serine--tRNA ligase (424 aa).

Position 230–232 (230–232) interacts with L-serine; it reads TSE. ATP is bound by residues 261–263 and valine 277; that span reads RKE. Glutamate 284 contacts L-serine. 348–351 is an ATP binding site; it reads ELTS. L-serine is bound at residue threonine 382.

This sequence belongs to the class-II aminoacyl-tRNA synthetase family. Type-1 seryl-tRNA synthetase subfamily. As to quaternary structure, homodimer. The tRNA molecule binds across the dimer.

The protein localises to the cytoplasm. It catalyses the reaction tRNA(Ser) + L-serine + ATP = L-seryl-tRNA(Ser) + AMP + diphosphate + H(+). The enzyme catalyses tRNA(Sec) + L-serine + ATP = L-seryl-tRNA(Sec) + AMP + diphosphate + H(+). Its pathway is aminoacyl-tRNA biosynthesis; selenocysteinyl-tRNA(Sec) biosynthesis; L-seryl-tRNA(Sec) from L-serine and tRNA(Sec): step 1/1. Catalyzes the attachment of serine to tRNA(Ser). Is also able to aminoacylate tRNA(Sec) with serine, to form the misacylated tRNA L-seryl-tRNA(Sec), which will be further converted into selenocysteinyl-tRNA(Sec). The chain is Serine--tRNA ligase from Nocardioides sp. (strain ATCC BAA-499 / JS614).